Here is a 527-residue protein sequence, read N- to C-terminus: Arginine--tRNA ligase (527 aa).

Residues Ala112–His122 carry the 'HIGH' region motif.

The protein belongs to the class-I aminoacyl-tRNA synthetase family. In terms of assembly, monomer.

The protein resides in the cytoplasm. The enzyme catalyses tRNA(Arg) + L-arginine + ATP = L-arginyl-tRNA(Arg) + AMP + diphosphate. The sequence is that of Arginine--tRNA ligase from Nitratiruptor sp. (strain SB155-2).